An 82-amino-acid chain; its full sequence is Sec-independent protein translocase protein TatA (82 aa).

A helical transmembrane segment spans residues 1–21 (MGGISIWQLLIIAVIIVLLFG). The interval 46-82 (DEPAKDAKKDADFVPQNLEKKEAETVEKQKQNDKEQA) is disordered.

It belongs to the TatA/E family. The Tat system comprises two distinct complexes: a TatABC complex, containing multiple copies of TatA, TatB and TatC subunits, and a separate TatA complex, containing only TatA subunits. Substrates initially bind to the TatABC complex, which probably triggers association of the separate TatA complex to form the active translocon.

The protein localises to the cell inner membrane. Part of the twin-arginine translocation (Tat) system that transports large folded proteins containing a characteristic twin-arginine motif in their signal peptide across membranes. TatA could form the protein-conducting channel of the Tat system. In Aliivibrio fischeri (strain MJ11) (Vibrio fischeri), this protein is Sec-independent protein translocase protein TatA.